Here is an 833-residue protein sequence, read N- to C-terminus: Leucine--tRNA ligase (833 aa).

Residues 41 to 52 (PYPSGAGLHVGH) carry the 'HIGH' region motif. The short motif at 610-614 (KMSKS) is the 'KMSKS' region element. Lysine 613 provides a ligand contact to ATP.

The protein belongs to the class-I aminoacyl-tRNA synthetase family.

It is found in the cytoplasm. The catalysed reaction is tRNA(Leu) + L-leucine + ATP = L-leucyl-tRNA(Leu) + AMP + diphosphate. This is Leucine--tRNA ligase from Streptococcus equi subsp. zooepidemicus (strain MGCS10565).